A 666-amino-acid polypeptide reads, in one-letter code: Chaperone protein dnaK1 (666 aa).

Threonine 198 bears the Phosphothreonine; by autocatalysis mark.

This sequence belongs to the heat shock protein 70 family.

In terms of biological role, acts as a chaperone. The chain is Chaperone protein dnaK1 (dnaK1) from Prochlorococcus marinus (strain SARG / CCMP1375 / SS120).